The sequence spans 681 residues: Leucine-rich repeat, immunoglobulin-like domain and transmembrane domain-containing protein 3 (681 aa).

Positions 1-19 (MWLSACLCLVLSFLGGVNG) are cleaved as a signal peptide. The N-linked (GlcNAc...) asparagine glycan is linked to N18. Topologically, residues 20–584 (TCPSQCSCEY…RVEGRGSQWS (565 aa)) are lumenal. LRR repeat units follow at residues 56-79 (PVDT…AFYY), 80-103 (LVEL…SFYN), 104-128 (LRQL…LLDM), 129-151 (PHLR…AVRY), and 152-175 (LRNL…FLDS). Residues 254-344 (PSVMMSATKI…GISEAVVTVT (91 aa)) form the Ig-like domain. Cysteines 275 and 328 form a disulfide. Residue N296 is glycosylated (N-linked (GlcNAc...) asparagine). 2 disordered regions span residues 350–391 (TTTL…GLTS) and 425–464 (TSVQ…KFPP). Positions 378 to 391 (TPPSKSWLSPGLTS) are enriched in polar residues. N485 and N506 each carry an N-linked (GlcNAc...) asparagine glycan. A helical membrane pass occupies residues 585–605 (LLLVVTSTACVIVVPLICFLL). Topologically, residues 606 to 681 (YKVCKLQCTS…SDGCRTEYYG (76 aa)) are cytoplasmic.

Detected in the outer plexiform layer (OPL) of the retina, where it localizes to rod and cone ON-bipolar cells (at protein level). Also detected in bipolar cell bodies in the inner retinal layer (INL) (at protein level).

It is found in the cell projection. It localises to the dendrite. The protein resides in the perikaryon. Its subcellular location is the endoplasmic reticulum membrane. In terms of biological role, plays a role in the synapse formation and synaptic transmission between cone photoreceptor cells and retinal bipolar cells. Required for normal transmission of a light-evoked stimulus from the cone photoreceptor cells to the ON-bipolar cells and ON-ganglion cells in the inner retina. Required in retinal ON-bipolar cells for normal localization of the cation channel TRPM1 at dendrite tips. Seems to play a specific role in synaptic contacts made by ON-bipolar cells with cone photoreceptor pedicles. May also have a role in cone synapse formation. Might facilitate FGFR1 exit from the endoplasmic reticulum to the Golgi. Could be a regulator of the FGFRs. This chain is Leucine-rich repeat, immunoglobulin-like domain and transmembrane domain-containing protein 3, found in Mus musculus (Mouse).